Here is a 246-residue protein sequence, read N- to C-terminus: 23S rRNA (guanosine-2'-O-)-methyltransferase RlmB (246 aa).

S-adenosyl-L-methionine contacts are provided by G197, I217, and L226.

It belongs to the class IV-like SAM-binding methyltransferase superfamily. RNA methyltransferase TrmH family. RlmB subfamily.

It localises to the cytoplasm. It carries out the reaction guanosine(2251) in 23S rRNA + S-adenosyl-L-methionine = 2'-O-methylguanosine(2251) in 23S rRNA + S-adenosyl-L-homocysteine + H(+). Specifically methylates the ribose of guanosine 2251 in 23S rRNA. This chain is 23S rRNA (guanosine-2'-O-)-methyltransferase RlmB, found in Haemophilus ducreyi (strain 35000HP / ATCC 700724).